A 161-amino-acid chain; its full sequence is Large ribosomal subunit protein uL15 (161 aa).

Positions 1–43 (MKLSEIADNVGSRKKRMRIGRGIGSGKGKTGGRGGKGQTARSG) are disordered. Positions 21–37 (RGIGSGKGKTGGRGGKG) are enriched in gly residues.

In terms of assembly, part of the 50S ribosomal subunit.

Binds to the 23S rRNA. The protein is Large ribosomal subunit protein uL15 of Rhodopseudomonas palustris (strain ATCC BAA-98 / CGA009).